A 482-amino-acid polypeptide reads, in one-letter code: MSAIRPAAVVVLAAGEGTRMKSATPKVLHELCGRSLVGHVLAAAGELDPENLVAVVGHAREKVTAHLAEVAPDVRTAVQEQQNGTGHAVRMGLEAMGGAVDGVVVVVCGDTPLLTGETLKALAATHTADGNAVTVLTAEVPDATGYGRIVRDGASGAVTAIVEHKDASESQRAIREINSGVFAFDGQLLADALGKVRTDNSQGEEYLTDVLGILREAGHRVGASVAGDHREIAGINNRVQLAEARRILNDRLLTGAMLAGVTVVDPATTWVDVTVTFEQDVVVHPGTQLHGTTHLAEGCEVGPNTRLTDTRVEAGARVDNTVANGAHVGPQASVGPYAYLRPGTRLGLKSKIGTFVEAKNSSIGEGTKVPHLSYMGDATVGDFTNIGAASVFVNYDGQDKHHTTIGSHCRTGSDNMFVAPVTVGDGAYTAAGSVITKDVPPGSLAVARGQQRNIEGWVARKRPGSAAAKAAEAVSREADGED.

The pyrophosphorylase stretch occupies residues 1-238 (MSAIRPAAVV…HREIAGINNR (238 aa)). Residues 12 to 15 (LAAG), Lys-26, Gln-79, and 84 to 85 (GT) contribute to the UDP-N-acetyl-alpha-D-glucosamine site. Residue Asp-110 participates in Mg(2+) binding. Gly-147, Glu-163, Asn-178, and Asn-236 together coordinate UDP-N-acetyl-alpha-D-glucosamine. Asn-236 contacts Mg(2+). The linker stretch occupies residues 239–259 (VQLAEARRILNDRLLTGAMLA). The interval 260–482 (GVTVVDPATT…AVSREADGED (223 aa)) is N-acetyltransferase. UDP-N-acetyl-alpha-D-glucosamine contacts are provided by Arg-341 and Lys-359. His-371 functions as the Proton acceptor in the catalytic mechanism. UDP-N-acetyl-alpha-D-glucosamine contacts are provided by Tyr-374 and Asn-385. Acetyl-CoA-binding positions include Ala-388, 394 to 395 (NY), Ser-413, Ala-431, and Arg-448. The interval 460 to 482 (RKRPGSAAAKAAEAVSREADGED) is disordered. The span at 464–473 (GSAAAKAAEA) shows a compositional bias: low complexity.

It in the N-terminal section; belongs to the N-acetylglucosamine-1-phosphate uridyltransferase family. This sequence in the C-terminal section; belongs to the transferase hexapeptide repeat family. In terms of assembly, homotrimer. The cofactor is Mg(2+).

It is found in the cytoplasm. The catalysed reaction is alpha-D-glucosamine 1-phosphate + acetyl-CoA = N-acetyl-alpha-D-glucosamine 1-phosphate + CoA + H(+). It catalyses the reaction N-acetyl-alpha-D-glucosamine 1-phosphate + UTP + H(+) = UDP-N-acetyl-alpha-D-glucosamine + diphosphate. It participates in nucleotide-sugar biosynthesis; UDP-N-acetyl-alpha-D-glucosamine biosynthesis; N-acetyl-alpha-D-glucosamine 1-phosphate from alpha-D-glucosamine 6-phosphate (route II): step 2/2. It functions in the pathway nucleotide-sugar biosynthesis; UDP-N-acetyl-alpha-D-glucosamine biosynthesis; UDP-N-acetyl-alpha-D-glucosamine from N-acetyl-alpha-D-glucosamine 1-phosphate: step 1/1. Its pathway is bacterial outer membrane biogenesis; LPS lipid A biosynthesis. Catalyzes the last two sequential reactions in the de novo biosynthetic pathway for UDP-N-acetylglucosamine (UDP-GlcNAc). The C-terminal domain catalyzes the transfer of acetyl group from acetyl coenzyme A to glucosamine-1-phosphate (GlcN-1-P) to produce N-acetylglucosamine-1-phosphate (GlcNAc-1-P), which is converted into UDP-GlcNAc by the transfer of uridine 5-monophosphate (from uridine 5-triphosphate), a reaction catalyzed by the N-terminal domain. The protein is Bifunctional protein GlmU of Streptomyces coelicolor (strain ATCC BAA-471 / A3(2) / M145).